The sequence spans 452 residues: Protein phosphatase 1F (452 aa).

The 258-residue stretch at 153 to 410 (LVSIHAIRNT…DNITVMVVFL (258 aa)) folds into the PPM-type phosphatase domain. Mn(2+)-binding residues include aspartate 195, glycine 196, aspartate 357, and aspartate 401. Serine 452 carries the phosphoserine modification.

The protein belongs to the PP2C family. Associates with FEM1B. Requires Mg(2+) as cofactor. The cofactor is Mn(2+). In terms of tissue distribution, expressed in the liver.

It catalyses the reaction O-phospho-L-seryl-[protein] + H2O = L-seryl-[protein] + phosphate. The catalysed reaction is O-phospho-L-threonyl-[protein] + H2O = L-threonyl-[protein] + phosphate. Dephosphorylates and concomitantly deactivates CaM-kinase II activated upon autophosphorylation, and CaM-kinases IV and I activated upon phosphorylation by CaM-kinase kinase. Promotes apoptosis. This Mus musculus (Mouse) protein is Protein phosphatase 1F (Ppm1f).